The sequence spans 315 residues: Glutathione synthetase (315 aa).

One can recognise an ATP-grasp domain in the interval 125 to 310; that stretch reads KLYTAWFADL…ITGMLMDAIE (186 aa). 151–207 provides a ligand contact to ATP; it reads WEKHGDIIMKPLDGMGGASIFRVKEGDPNIGVIAETLTELGNRYCMAQNYLPAIKDG. 2 residues coordinate Mg(2+): glutamate 281 and asparagine 283.

It belongs to the prokaryotic GSH synthase family. Requires Mg(2+) as cofactor. It depends on Mn(2+) as a cofactor.

It catalyses the reaction gamma-L-glutamyl-L-cysteine + glycine + ATP = glutathione + ADP + phosphate + H(+). It participates in sulfur metabolism; glutathione biosynthesis; glutathione from L-cysteine and L-glutamate: step 2/2. The protein is Glutathione synthetase of Salmonella typhimurium (strain LT2 / SGSC1412 / ATCC 700720).